We begin with the raw amino-acid sequence, 352 residues long: MALAGPLKVCIVGSGNWGSAVAKIIGHNVKNLKKFASTVNMWVFEENINGRKLTEIINTEHENVKYLPGYKLPENVVAVPNLSDAVKDADLLIFVIPHQFIHKICQEISGKVHRNALGITLIKGIDEGPEGLRLISDIIREKMDIDVSVLMGANIANEVAAEKFCETTIGSKNKEHGLLFKELLQTPNFRITVVEDADTVELCGALKNIVAVAAGFCDGLGCGDNTKAAVIRLGLMEMIAFANVFCKGPVSIATFLESCGVADLITTCYGGRNRKVSEAFVKSGKSIEELEKEMLNGQKLQGPQTSAEVYRILQQKNMVNKFPLFTAVYQICYEGKPVEDVISCLQSHPEHM.

G13–G18 lines the NAD(+) pocket. K123 provides a ligand contact to substrate. An NAD(+)-binding site is contributed by A156. The Proton acceptor role is filled by K207. Residues R272, K299, and Q301 each coordinate NAD(+). R272 to N273 serves as a coordination point for substrate.

This sequence belongs to the NAD-dependent glycerol-3-phosphate dehydrogenase family.

It localises to the cytoplasm. It catalyses the reaction sn-glycerol 3-phosphate + NAD(+) = dihydroxyacetone phosphate + NADH + H(+). Plays a role in regulating cardiac sodium current. This chain is Glycerol-3-phosphate dehydrogenase 1-like protein (gpd1l), found in Xenopus tropicalis (Western clawed frog).